Consider the following 183-residue polypeptide: Glutathione-regulated potassium-efflux system ancillary protein KefG (183 aa).

This sequence belongs to the NAD(P)H dehydrogenase (quinone) family. KefG subfamily. As to quaternary structure, interacts with KefB.

It is found in the cell inner membrane. It carries out the reaction a quinone + NADH + H(+) = a quinol + NAD(+). The enzyme catalyses a quinone + NADPH + H(+) = a quinol + NADP(+). Functionally, regulatory subunit of a potassium efflux system that confers protection against electrophiles. Required for full activity of KefB. In Salmonella gallinarum (strain 287/91 / NCTC 13346), this protein is Glutathione-regulated potassium-efflux system ancillary protein KefG.